We begin with the raw amino-acid sequence, 264 residues long: 3-methyl-2-oxobutanoate hydroxymethyltransferase (264 aa).

Mg(2+)-binding residues include D45 and D84. 3-methyl-2-oxobutanoate contacts are provided by residues 45–46 (DS), D84, and K112. E114 is a binding site for Mg(2+). E181 serves as the catalytic Proton acceptor.

The protein belongs to the PanB family. As to quaternary structure, homodecamer; pentamer of dimers. Requires Mg(2+) as cofactor.

The protein localises to the cytoplasm. The catalysed reaction is 3-methyl-2-oxobutanoate + (6R)-5,10-methylene-5,6,7,8-tetrahydrofolate + H2O = 2-dehydropantoate + (6S)-5,6,7,8-tetrahydrofolate. Its pathway is cofactor biosynthesis; (R)-pantothenate biosynthesis; (R)-pantoate from 3-methyl-2-oxobutanoate: step 1/2. In terms of biological role, catalyzes the reversible reaction in which hydroxymethyl group from 5,10-methylenetetrahydrofolate is transferred onto alpha-ketoisovalerate to form ketopantoate. In Shewanella denitrificans (strain OS217 / ATCC BAA-1090 / DSM 15013), this protein is 3-methyl-2-oxobutanoate hydroxymethyltransferase.